The following is a 344-amino-acid chain: MNWPNMPPGDRRWLWIGLTLPLCLLNGWVLLQILDYFQSPLRIFIIANLVAFILGYPVRWLQRYPRLKLPYAVALVLLTTAIILAVIGLLVIPKLVDQIRTVLQLLPHLNALGDRHLESLDNLSNQWEIPTNFRAWGRELSNEFPNQIRSITNQLINLLIWTAGSLVEAGFIFIMTVYLLLRGQTFWDGIFRWLPIDWRHKVRQRLRHSFQNYYIGQATVAALLGVSLIISLSIFQVPLALLFGMFVGFMAFFPFGGGTSIVLISIIASFQSIWLGIKVLAIATVVDQVVENGLAPKLLGRVTGVHPVWILLSLMIGAKVAGLLGILVAIPIASFIRDMLNDFI.

8 helical membrane-spanning segments follow: residues 14–34 (LWIGLTLPLCLLNGWVLLQIL), 41–61 (LRIFIIANLVAFILGYPVRWL), 72–92 (AVALVLLTTAIILAVIGLLVI), 155–175 (LINLLIWTAGSLVEAGFIFIM), 215–235 (IGQATVAALLGVSLIISLSIF), 237–257 (VPLALLFGMFVGFMAFFPFGG), 262–282 (VLISIIASFQSIWLGIKVLAI), and 310–330 (ILLSLMIGAKVAGLLGILVAI).

It belongs to the autoinducer-2 exporter (AI-2E) (TC 2.A.86) family.

It localises to the cell membrane. This chain is Putative transport protein sll0060, found in Synechocystis sp. (strain ATCC 27184 / PCC 6803 / Kazusa).